Consider the following 235-residue polypeptide: uncharacterized protein (235 aa).

The 234-residue stretch at Ile-2 to Arg-235 folds into the ABC transporter domain. Gly-38–Ser-45 lines the ATP pocket.

It belongs to the ABC transporter superfamily.

This is an uncharacterized protein from Methanocaldococcus jannaschii (strain ATCC 43067 / DSM 2661 / JAL-1 / JCM 10045 / NBRC 100440) (Methanococcus jannaschii).